We begin with the raw amino-acid sequence, 357 residues long: Holliday junction branch migration complex subunit RuvB (357 aa).

Residues 1–15 (MAIQSDSLSSLPDSP) show a composition bias toward low complexity. Residues 1 to 30 (MAIQSDSLSSLPDSPRIVAPQPVSPNEESI) form a disordered region. Positions 13 to 195 (DSPRIVAPQP…FGIVSRLEFY (183 aa)) are large ATPase domain (RuvB-L). ATP-binding positions include Leu-34, Arg-35, Gly-76, Lys-79, Thr-80, Thr-81, 142–144 (EDF), Arg-185, Tyr-195, and Arg-232. Thr-80 serves as a coordination point for Mg(2+). The segment at 196-266 (NTDELARIVT…AAGRALAMLD (71 aa)) is small ATPAse domain (RuvB-S). Residues 269–357 (PQGLDVMDRK…SGGTGELFSK (89 aa)) form a head domain (RuvB-H) region. Residues Arg-305, Arg-324, and Arg-329 each coordinate DNA.

Belongs to the RuvB family. In terms of assembly, homohexamer. Forms an RuvA(8)-RuvB(12)-Holliday junction (HJ) complex. HJ DNA is sandwiched between 2 RuvA tetramers; dsDNA enters through RuvA and exits via RuvB. An RuvB hexamer assembles on each DNA strand where it exits the tetramer. Each RuvB hexamer is contacted by two RuvA subunits (via domain III) on 2 adjacent RuvB subunits; this complex drives branch migration. In the full resolvosome a probable DNA-RuvA(4)-RuvB(12)-RuvC(2) complex forms which resolves the HJ.

It localises to the cytoplasm. It carries out the reaction ATP + H2O = ADP + phosphate + H(+). Its function is as follows. The RuvA-RuvB-RuvC complex processes Holliday junction (HJ) DNA during genetic recombination and DNA repair, while the RuvA-RuvB complex plays an important role in the rescue of blocked DNA replication forks via replication fork reversal (RFR). RuvA specifically binds to HJ cruciform DNA, conferring on it an open structure. The RuvB hexamer acts as an ATP-dependent pump, pulling dsDNA into and through the RuvAB complex. RuvB forms 2 homohexamers on either side of HJ DNA bound by 1 or 2 RuvA tetramers; 4 subunits per hexamer contact DNA at a time. Coordinated motions by a converter formed by DNA-disengaged RuvB subunits stimulates ATP hydrolysis and nucleotide exchange. Immobilization of the converter enables RuvB to convert the ATP-contained energy into a lever motion, pulling 2 nucleotides of DNA out of the RuvA tetramer per ATP hydrolyzed, thus driving DNA branch migration. The RuvB motors rotate together with the DNA substrate, which together with the progressing nucleotide cycle form the mechanistic basis for DNA recombination by continuous HJ branch migration. Branch migration allows RuvC to scan DNA until it finds its consensus sequence, where it cleaves and resolves cruciform DNA. The protein is Holliday junction branch migration complex subunit RuvB of Bordetella parapertussis (strain 12822 / ATCC BAA-587 / NCTC 13253).